We begin with the raw amino-acid sequence, 504 residues long: Cytochrome P450 monooxygenase iccC (504 aa).

A helical membrane pass occupies residues 7 to 26 (LPWILLYTGFLAIFLSRLFS). Asn-134, Asn-312, Asn-365, and Asn-374 each carry an N-linked (GlcNAc...) asparagine glycan. Cys-452 contributes to the heme binding site. The N-linked (GlcNAc...) asparagine glycan is linked to Asn-494.

The protein belongs to the cytochrome P450 family. Requires heme as cofactor.

It localises to the membrane. The enzyme catalyses (3E,5S)-3-[(2E,4E,8S,10E,12Z)-1-hydroxy-4,8-dimethyltetradeca-2,4,10,12-tetraen-1-ylidene]-5-[(4-hydroxyphenyl)methyl]pyrrolidine-2,4-dione + reduced [NADPH--hemoprotein reductase] + O2 = 3-[(2E,4E,8S,10E,12Z)-4,8-dimethyltetradeca-2,4,10,12-tetraenoyl]-4-hydroxy-5-(4-hydroxyphenyl)-1,2-dihydropyridin-2-one + oxidized [NADPH--hemoprotein reductase] + 2 H2O. It participates in mycotoxin biosynthesis. Functionally, cytochrome P450 monooxygenase; part of the gene cluster that mediates the biosynthesis of ilicicolin H, a 4-hydroxy-2-pyridonealkaloid that has potent and broad antifungal activities by inhibiting the mitochondrial respiration chain. IccC catalyzes the ring expansion of the tetramate intermediate to the acyclic 2-pyridone intermediate that contains the trans bis-diene chain. The biosynthesis of ilicicolin H starts with formation of the tetramic acid by the hybrid PKS-NRPS synthetase iccA with the partnering trans-enoyl reductase iccB since iccA lacks a designated enoylreductase (ER) domain. The cytochrome P450 monooxygenase iccC then catalyzes the ring expansion of the tetramate to the acyclic 2-pyridone. The pericyclase iccD further converts the acyclic 2-pyridone into 8-epi-ilicicolin H. Finally, the epimerase iccE converts 8-epi-ilicicolin H into ilicicolin H via epimerization. IccA to iccE are sufficient for ilicicolin H biosynthesis and the roles of the remaining enzymes, iccF, iccG and iccH within the pathway have still to be determined. This chain is Cytochrome P450 monooxygenase iccC, found in Talaromyces variabilis (Penicillium variabile).